Reading from the N-terminus, the 523-residue chain is Glycerate kinase (523 aa).

Ser60 carries the post-translational modification Phosphoserine.

Belongs to the glycerate kinase type-2 family. As to expression, widely expressed.

It is found in the cytoplasm. Its subcellular location is the mitochondrion. The catalysed reaction is (R)-glycerate + ATP = (2R)-3-phosphoglycerate + ADP + H(+). In Homo sapiens (Human), this protein is Glycerate kinase (GLYCTK).